Reading from the N-terminus, the 586-residue chain is Pyruvate kinase (586 aa).

R32 lines the substrate pocket. 4 residues coordinate K(+): N34, S36, D66, and T67. An ATP-binding site is contributed by N34–H37. Residues R73 and K156 each coordinate ATP. E222 serves as a coordination point for Mg(2+). G245, D246, and T278 together coordinate substrate. Residue D246 participates in Mg(2+) binding.

It belongs to the pyruvate kinase family. In the C-terminal section; belongs to the PEP-utilizing enzyme family. The cofactor is Mg(2+). It depends on K(+) as a cofactor.

It carries out the reaction pyruvate + ATP = phosphoenolpyruvate + ADP + H(+). Its pathway is carbohydrate degradation; glycolysis; pyruvate from D-glyceraldehyde 3-phosphate: step 5/5. In Staphylococcus haemolyticus (strain JCSC1435), this protein is Pyruvate kinase (pyk).